A 165-amino-acid chain; its full sequence is Large ribosomal subunit protein uL11A (165 aa).

The residue at position 67 (Arg-67) is an N5-methylarginine.

The protein belongs to the universal ribosomal protein uL11 family. As to quaternary structure, component of the large ribosomal subunit (LSU). Mature yeast ribosomes consist of a small (40S) and a large (60S) subunit. The 40S small subunit contains 1 molecule of ribosomal RNA (18S rRNA) and at least 33 different proteins. The large 60S subunit contains 3 rRNA molecules (25S, 5.8S and 5S rRNA) and at least 46 different proteins.

The protein localises to the cytoplasm. It localises to the nucleus. Its subcellular location is the nucleolus. In terms of biological role, this protein binds directly to 26S ribosomal RNA. Its function is as follows. Component of the ribosome, a large ribonucleoprotein complex responsible for the synthesis of proteins in the cell. The small ribosomal subunit (SSU) binds messenger RNAs (mRNAs) and translates the encoded message by selecting cognate aminoacyl-transfer RNA (tRNA) molecules. The large subunit (LSU) contains the ribosomal catalytic site termed the peptidyl transferase center (PTC), which catalyzes the formation of peptide bonds, thereby polymerizing the amino acids delivered by tRNAs into a polypeptide chain. The nascent polypeptides leave the ribosome through a tunnel in the LSU and interact with protein factors that function in enzymatic processing, targeting, and the membrane insertion of nascent chains at the exit of the ribosomal tunnel. This Schizosaccharomyces pombe (strain 972 / ATCC 24843) (Fission yeast) protein is Large ribosomal subunit protein uL11A (rpl1201).